Reading from the N-terminus, the 514-residue chain is Maturase K (514 aa).

Belongs to the intron maturase 2 family. MatK subfamily.

Its subcellular location is the plastid. It localises to the chloroplast. Functionally, usually encoded in the trnK tRNA gene intron. Probably assists in splicing its own and other chloroplast group II introns. The polypeptide is Maturase K (Lepidozamia peroffskyana (Peroffsky's lepidozamia)).